Here is a 558-residue protein sequence, read N- to C-terminus: Dihydroxy-acid dehydratase (558 aa).

A Mg(2+)-binding site is contributed by Asp-78. Cys-119 serves as a coordination point for [2Fe-2S] cluster. The Mg(2+) site is built by Asp-120 and Lys-121. Lys-121 bears the N6-carboxylysine mark. Cys-192 provides a ligand contact to [2Fe-2S] cluster. Glu-445 serves as a coordination point for Mg(2+). Ser-471 serves as the catalytic Proton acceptor.

It belongs to the IlvD/Edd family. As to quaternary structure, homodimer. It depends on [2Fe-2S] cluster as a cofactor. Mg(2+) serves as cofactor.

The enzyme catalyses (2R)-2,3-dihydroxy-3-methylbutanoate = 3-methyl-2-oxobutanoate + H2O. It catalyses the reaction (2R,3R)-2,3-dihydroxy-3-methylpentanoate = (S)-3-methyl-2-oxopentanoate + H2O. It participates in amino-acid biosynthesis; L-isoleucine biosynthesis; L-isoleucine from 2-oxobutanoate: step 3/4. Its pathway is amino-acid biosynthesis; L-valine biosynthesis; L-valine from pyruvate: step 3/4. Functionally, functions in the biosynthesis of branched-chain amino acids. Catalyzes the dehydration of (2R,3R)-2,3-dihydroxy-3-methylpentanoate (2,3-dihydroxy-3-methylvalerate) into 2-oxo-3-methylpentanoate (2-oxo-3-methylvalerate) and of (2R)-2,3-dihydroxy-3-methylbutanoate (2,3-dihydroxyisovalerate) into 2-oxo-3-methylbutanoate (2-oxoisovalerate), the penultimate precursor to L-isoleucine and L-valine, respectively. The sequence is that of Dihydroxy-acid dehydratase from Akkermansia muciniphila (strain ATCC BAA-835 / DSM 22959 / JCM 33894 / BCRC 81048 / CCUG 64013 / CIP 107961 / Muc).